The primary structure comprises 486 residues: ATP synthase subunit beta (486 aa).

164–171 (GGAGVGKT) is an ATP binding site.

It belongs to the ATPase alpha/beta chains family. As to quaternary structure, F-type ATPases have 2 components, CF(1) - the catalytic core - and CF(0) - the membrane proton channel. CF(1) has five subunits: alpha(3), beta(3), gamma(1), delta(1), epsilon(1). CF(0) has four main subunits: a(1), b(1), b'(1) and c(9-12).

It is found in the cellular thylakoid membrane. It carries out the reaction ATP + H2O + 4 H(+)(in) = ADP + phosphate + 5 H(+)(out). In terms of biological role, produces ATP from ADP in the presence of a proton gradient across the membrane. The catalytic sites are hosted primarily by the beta subunits. This Prochlorococcus marinus subsp. pastoris (strain CCMP1986 / NIES-2087 / MED4) protein is ATP synthase subunit beta.